Reading from the N-terminus, the 894-residue chain is Translation initiation factor IF-2 (894 aa).

The interval 52-301 (DRGAAPNKLT…RRPSTLTQGF (250 aa)) is disordered. Residues 68 to 82 (STLNIPSTGGKSKSV) are compositionally biased toward polar residues. Over residues 107–154 (EQARREAEELAQHQVQRDAEEKAKRAAEDKAKREAAEQAKRVAAESDK) the composition is skewed to basic and acidic residues. Over residues 155–168 (LTNQQTNTMTKSPQ) the composition is skewed to polar residues. Composition is skewed to basic and acidic residues over residues 171–214 (EKAR…ERGG) and 237–254 (HAREAEDENDRKVEGDRR). Positions 255–269 (SRTRGGKATKQKKTS) are enriched in basic residues. Positions 270–283 (RLSESKADREEARA) are enriched in basic and acidic residues. Residues 393–562 (SRAPVVTIMG…LLQAEVLELK (170 aa)) form the tr-type G domain. The interval 402–409 (GHVDHGKT) is G1. 402 to 409 (GHVDHGKT) contacts GTP. Residues 427–431 (GITQH) are G2. The tract at residues 448 to 451 (DTPG) is G3. GTP is bound by residues 448 to 452 (DTPGH) and 502 to 505 (NKID). The interval 502–505 (NKID) is G4. Positions 538 to 540 (SAK) are G5.

The protein belongs to the TRAFAC class translation factor GTPase superfamily. Classic translation factor GTPase family. IF-2 subfamily.

The protein localises to the cytoplasm. Its function is as follows. One of the essential components for the initiation of protein synthesis. Protects formylmethionyl-tRNA from spontaneous hydrolysis and promotes its binding to the 30S ribosomal subunits. Also involved in the hydrolysis of GTP during the formation of the 70S ribosomal complex. This Sodalis glossinidius (strain morsitans) protein is Translation initiation factor IF-2.